Reading from the N-terminus, the 882-residue chain is Alanine--tRNA ligase (882 aa).

Residues H570, H574, C672, and H676 each coordinate Zn(2+).

The protein belongs to the class-II aminoacyl-tRNA synthetase family. The cofactor is Zn(2+).

It localises to the cytoplasm. It carries out the reaction tRNA(Ala) + L-alanine + ATP = L-alanyl-tRNA(Ala) + AMP + diphosphate. In terms of biological role, catalyzes the attachment of alanine to tRNA(Ala) in a two-step reaction: alanine is first activated by ATP to form Ala-AMP and then transferred to the acceptor end of tRNA(Ala). Also edits incorrectly charged Ser-tRNA(Ala) and Gly-tRNA(Ala) via its editing domain. The chain is Alanine--tRNA ligase from Xanthomonas campestris pv. campestris (strain ATCC 33913 / DSM 3586 / NCPPB 528 / LMG 568 / P 25).